The sequence spans 43 residues: Bacteriocin mundticin (43 aa).

A disulfide bridge links Cys9 with Cys14.

Functionally, this bacteriocin inhibits the growth of several Gram-positive bacteria, especially pathogenic L.monocytogenes and C.botulinum but has no effect on the growth of a number of yeasts and Gram-negative bacteria. The sequence is that of Bacteriocin mundticin from Enterococcus mundtii.